The following is a 262-amino-acid chain: Adenosylcobinamide-GDP ribazoletransferase (262 aa).

The next 6 helical transmembrane spans lie at 43–63, 66–86, 120–140, 146–166, 191–211, and 242–262; these read YFGLVGLLIGLLSAIVFWLTQ, LPAGVSVLLAMLVGVLLTGGF, GAIALILALLLKWQLLVELAL, AGSALIVAHTVSRVVAASIIF, LFILVASGVLVLLFLKGLAAL, and AAQQICEIVCYLVLLIVGSIL.

Belongs to the CobS family. The cofactor is Mg(2+).

Its subcellular location is the cell inner membrane. It carries out the reaction alpha-ribazole + adenosylcob(III)inamide-GDP = adenosylcob(III)alamin + GMP + H(+). It catalyses the reaction alpha-ribazole 5'-phosphate + adenosylcob(III)inamide-GDP = adenosylcob(III)alamin 5'-phosphate + GMP + H(+). It participates in cofactor biosynthesis; adenosylcobalamin biosynthesis; adenosylcobalamin from cob(II)yrinate a,c-diamide: step 7/7. Functionally, joins adenosylcobinamide-GDP and alpha-ribazole to generate adenosylcobalamin (Ado-cobalamin). Also synthesizes adenosylcobalamin 5'-phosphate from adenosylcobinamide-GDP and alpha-ribazole 5'-phosphate. The polypeptide is Adenosylcobinamide-GDP ribazoletransferase (Shewanella putrefaciens (strain CN-32 / ATCC BAA-453)).